The sequence spans 431 residues: Glucose-1-phosphate adenylyltransferase (431 aa).

Residue Lys-39 coordinates beta-D-fructose 1,6-bisphosphate. Positions 40, 46, and 52 each coordinate AMP. Residue Tyr-114 coordinates alpha-D-glucose 1-phosphate. Arg-130 is a binding site for AMP. Alpha-D-glucose 1-phosphate is bound by residues Gly-179, 194 to 195 (EK), and Ser-212. Residues Glu-370 and Arg-386 each contribute to the AMP site. Beta-D-fructose 1,6-bisphosphate-binding positions include 419–423 (REMLR) and 429–431 (QER).

Belongs to the bacterial/plant glucose-1-phosphate adenylyltransferase family. Homotetramer.

It catalyses the reaction alpha-D-glucose 1-phosphate + ATP + H(+) = ADP-alpha-D-glucose + diphosphate. The protein operates within glycan biosynthesis; glycogen biosynthesis. With respect to regulation, allosterically activated by fructose-1,6-bisphosphate (F16BP) and inhibited by AMP. Functionally, involved in the biosynthesis of ADP-glucose, a building block required for the elongation reactions to produce glycogen. Catalyzes the reaction between ATP and alpha-D-glucose 1-phosphate (G1P) to produce pyrophosphate and ADP-Glc. This chain is Glucose-1-phosphate adenylyltransferase, found in Salmonella arizonae (strain ATCC BAA-731 / CDC346-86 / RSK2980).